A 110-amino-acid polypeptide reads, in one-letter code: Large ribosomal subunit protein uL22 (110 aa).

It belongs to the universal ribosomal protein uL22 family. As to quaternary structure, part of the 50S ribosomal subunit.

Its function is as follows. This protein binds specifically to 23S rRNA; its binding is stimulated by other ribosomal proteins, e.g. L4, L17, and L20. It is important during the early stages of 50S assembly. It makes multiple contacts with different domains of the 23S rRNA in the assembled 50S subunit and ribosome. Functionally, the globular domain of the protein is located near the polypeptide exit tunnel on the outside of the subunit, while an extended beta-hairpin is found that lines the wall of the exit tunnel in the center of the 70S ribosome. The sequence is that of Large ribosomal subunit protein uL22 from Acinetobacter baylyi (strain ATCC 33305 / BD413 / ADP1).